Here is a 277-residue protein sequence, read N- to C-terminus: Undecaprenyl-diphosphatase (277 aa).

7 helical membrane passes run 3–23 (IALL…EFLP), 44–64 (AKVF…LVYW), 82–102 (QFAL…LLFG), 109–129 (LFTP…ILWA), 188–208 (ATDF…VYSL), 218–238 (ADVP…WLCI), and 249–269 (SFIP…ATAW).

This sequence belongs to the UppP family.

The protein localises to the cell inner membrane. The catalysed reaction is di-trans,octa-cis-undecaprenyl diphosphate + H2O = di-trans,octa-cis-undecaprenyl phosphate + phosphate + H(+). Catalyzes the dephosphorylation of undecaprenyl diphosphate (UPP). Confers resistance to bacitracin. The sequence is that of Undecaprenyl-diphosphatase from Polaromonas sp. (strain JS666 / ATCC BAA-500).